The following is a 218-amino-acid chain: Ras-related protein R-Ras (218 aa).

The tract at residues 1 to 30 (MSSGAASGTGRGRPRGGGPGPGDPPPSETH) is disordered. The span at 7-20 (SGTGRGRPRGGGPG) shows a compositional bias: gly residues. 36–44 (GGGGVGKSA) provides a ligand contact to GTP. Residues 58–66 (YDPTIEDSY) carry the Effector region motif. GTP contacts are provided by residues 83–87 (DTAGQ), 142–145 (NKAD), and 172–174 (SAK). Position 215 is a cysteine methyl ester (C215). A lipid anchor (S-geranylgeranyl cysteine) is attached at C215. A propeptide spans 216-218 (VLL) (removed in mature form).

Belongs to the small GTPase superfamily. Ras family. In terms of assembly, interacts with PLCE1. Interacts (active GTP-bound form preferentially) with RGS14. Interacts with OSBPL3. Interacts with ZDHHC19. In terms of processing, S-palmitoylated by ZDHHC19, leading to increased association with membranes and with rafts/caveolae as well as enhanced cell viability.

Its subcellular location is the cell membrane. The enzyme catalyses GTP + H2O = GDP + phosphate + H(+). Its function is as follows. GTP-binding protein with GTPase activity, likely involved in the regulation of MAPK signaling pathway and thereby controlling multiple cellular processes. Regulates the organization of the actin cytoskeleton. With OSPBL3, modulates integrin beta-1 (ITGB1) activity. This is Ras-related protein R-Ras (RRAS) from Homo sapiens (Human).